We begin with the raw amino-acid sequence, 404 residues long: Probable tRNA sulfurtransferase (404 aa).

A THUMP domain is found at His60–Asp165. ATP contacts are provided by residues Met183 to Leu184, His208 to Phe209, Arg265, Gly287, and Gln296.

This sequence belongs to the ThiI family.

Its subcellular location is the cytoplasm. It carries out the reaction [ThiI sulfur-carrier protein]-S-sulfanyl-L-cysteine + a uridine in tRNA + 2 reduced [2Fe-2S]-[ferredoxin] + ATP + H(+) = [ThiI sulfur-carrier protein]-L-cysteine + a 4-thiouridine in tRNA + 2 oxidized [2Fe-2S]-[ferredoxin] + AMP + diphosphate. It catalyses the reaction [ThiS sulfur-carrier protein]-C-terminal Gly-Gly-AMP + S-sulfanyl-L-cysteinyl-[cysteine desulfurase] + AH2 = [ThiS sulfur-carrier protein]-C-terminal-Gly-aminoethanethioate + L-cysteinyl-[cysteine desulfurase] + A + AMP + 2 H(+). The protein operates within cofactor biosynthesis; thiamine diphosphate biosynthesis. Functionally, catalyzes the ATP-dependent transfer of a sulfur to tRNA to produce 4-thiouridine in position 8 of tRNAs, which functions as a near-UV photosensor. Also catalyzes the transfer of sulfur to the sulfur carrier protein ThiS, forming ThiS-thiocarboxylate. This is a step in the synthesis of thiazole, in the thiamine biosynthesis pathway. The sulfur is donated as persulfide by IscS. This Streptococcus agalactiae serotype V (strain ATCC BAA-611 / 2603 V/R) protein is Probable tRNA sulfurtransferase.